Consider the following 114-residue polypeptide: MSISQIDDYRTQYTLETFSFLPELTADEIYDQIVYIINQGWSPALEHEEPAKASDHYWGMWKLPMFGTRDPNEVLAEIDACRQAYPNHLIRLVGYDNYTQCQGHNFVVYRPRGM.

It belongs to the RuBisCO small chain family. Heterohexadecamer of 8 large and 8 small subunits. Forms a CsoS2-CsoS1-RuBisCO complex.

The protein localises to the carboxysome. Its function is as follows. RuBisCO catalyzes two reactions: the carboxylation of D-ribulose 1,5-bisphosphate, the primary event in carbon dioxide fixation, as well as the oxidative fragmentation of the pentose substrate. Both reactions occur simultaneously and in competition at the same active site. Although the small subunit is not catalytic it is essential for maximal activity. Functionally, replacing the endogenous type I ccbLS genes in H.neapolitanus with this carboxysomally targeted enzyme reconstitutes RuBisCO with about 25% of normal activity; the active enzyme is targeted to carboxysomes. The chain is Ribulose bisphosphate carboxylase small subunit 2 from Hydrogenovibrio crunogenus (strain DSM 25203 / XCL-2) (Thiomicrospira crunogena).